The chain runs to 207 residues: Ras-related protein rab7 (207 aa).

Residues 15 to 22 (GDSGVGKT), 34 to 40 (SNQYKAT), 63 to 67 (DTAGQ), 125 to 128 (NKID), and 156 to 157 (AK) each bind GTP. An Effector region motif is present at residues 37–45 (YKATIGADF). Residues Cys-205 and Cys-207 are each lipidated (S-geranylgeranyl cysteine). Cys-207 carries the cysteine methyl ester modification.

The protein belongs to the small GTPase superfamily. Rab family. In terms of assembly, (Microbial infection) Interacts with Singapore grouper iridoviral proteins VP69 (ORF69) and VP101 (ORF101). Ubiquitously expressed. Expressed in liver, spleen, kidney, brain, intestine, heart, skin, muscle, gill and stomach.

Its subcellular location is the late endosome membrane. It localises to the lysosome membrane. Its function is as follows. Key regulator in endo-lysosomal trafficking. Governs early-to-late endosomal maturation, microtubule minus-end as well as plus-end directed endosomal migration and positioning, and endosome-lysosome transport through different protein-protein interaction cascades. Plays important roles in microbial pathogen infection and survival, as well as in participating in the life cycle of viruses. This chain is Ras-related protein rab7, found in Epinephelus coioides (Orange-spotted grouper).